The sequence spans 222 residues: Lipid transferase CIDEC (222 aa).

Polar residues predominate over residues 1-19 (MAMYTAVSTSVVTQQQLSE). Disordered stretches follow at residues 1 to 33 (MAMYTAVSTSVVTQQQLSEPSAEAPRARPCRVT) and 203 to 222 (EQPPKSKAASLIPTSLKMLQ). The interval 1-33 (MAMYTAVSTSVVTQQQLSEPSAEAPRARPCRVT) is required for liquid-liquid phase separation (LLPS). A CIDE-N domain is found at 26-103 (RARPCRVTTA…VLHKGQKWQP (78 aa)).

Belongs to the CIDE family. In terms of assembly, homodimer. Homooligomer; undergoes liquid-liquid phase separation (LLPS) via its N-terminus, facilitating lipid droplet fusion, occurs at the lipid droplet contact sites. Interacts with CIDEA. Interacts with PLIN1. Interacts with NFAT5; this interaction is direct and retains NFAT5 in the cytoplasm. Interacts with CEBPB. Interacts with isoform CLSTN3beta of CLSTN3; inhibiting the lipid transferase activity of CIDEC. Ubiquitinated and targeted to proteasomal degradation, resulting in a short half-life (about 15 minutes in 3T3-L1 cells). Protein stability depends on triaclyglycerol synthesis, fatty acid availability and lipid droplet formation.

The protein resides in the lipid droplet. The protein localises to the endoplasmic reticulum. It localises to the nucleus. The enzyme catalyses a triacyl-sn-glycerol(in) = a triacyl-sn-glycerol(out). Its function is as follows. Lipid transferase specifically expressed in white adipose tissue, which promotes unilocular lipid droplet formation by mediating lipid droplet fusion. Lipid droplet fusion promotes their enlargement, restricting lipolysis and favoring lipid storage. Localizes on the lipid droplet surface, at focal contact sites between lipid droplets, and mediates atypical lipid droplet fusion by undergoing liquid-liquid phase separation (LLPS) and promoting directional net neutral lipid transfer from the smaller to larger lipid droplets. The transfer direction may be driven by the internal pressure difference between the contacting lipid droplet pair. Its role in neutral lipid transfer and lipid droplet enlargement is activated by the interaction with PLIN1. May also act as a CEBPB coactivator in the white adipose tissue to control the expression of a subset of CEBPB downstream target genes, including SOCS1, SOCS3, TGFB1, TGFBR1, ID2 and XDH. When overexpressed in preadipocytes, induces apoptosis or increases cell susceptibility to apoptosis induced by serum deprivation or TGFB treatment. The sequence is that of Lipid transferase CIDEC from Bos taurus (Bovine).